A 424-amino-acid chain; its full sequence is Glutamyl-tRNA reductase (424 aa).

Residues 53–56 (TCNR), Ser111, 116–118 (EPQ), and Gln122 each bind substrate. The active-site Nucleophile is Cys54. Position 191–196 (191–196 (GAGEMI)) interacts with NADP(+).

This sequence belongs to the glutamyl-tRNA reductase family. Homodimer.

It catalyses the reaction (S)-4-amino-5-oxopentanoate + tRNA(Glu) + NADP(+) = L-glutamyl-tRNA(Glu) + NADPH + H(+). It participates in porphyrin-containing compound metabolism; protoporphyrin-IX biosynthesis; 5-aminolevulinate from L-glutamyl-tRNA(Glu): step 1/2. Functionally, catalyzes the NADPH-dependent reduction of glutamyl-tRNA(Glu) to glutamate 1-semialdehyde (GSA). In Bordetella bronchiseptica (strain ATCC BAA-588 / NCTC 13252 / RB50) (Alcaligenes bronchisepticus), this protein is Glutamyl-tRNA reductase.